The following is a 754-amino-acid chain: Ribonucleoside-diphosphate reductase subunit alpha (754 aa).

One can recognise an ATP-cone domain in the interval 4–93 (INVIKSSGVS…MFALRKHVYG (90 aa)). Substrate-binding positions include threonine 206, 221-222 (SC), glycine 250, 435-439 (NLCCE), and 615-619 (PCESS). Cysteine 222 and cysteine 457 are joined by a disulfide. The active-site Proton acceptor is asparagine 435. Cysteine 437 acts as the Cysteine radical intermediate in catalysis. The Proton acceptor role is filled by glutamate 439. Positions 621-641 (QVSNSTNGYEPPRGPVSVKES) are disordered.

The protein belongs to the ribonucleoside diphosphate reductase large chain family. As to quaternary structure, heterodimer of a large and a small subunit.

The catalysed reaction is a 2'-deoxyribonucleoside 5'-diphosphate + [thioredoxin]-disulfide + H2O = a ribonucleoside 5'-diphosphate + [thioredoxin]-dithiol. Its activity is regulated as follows. Under complex allosteric control mediated by deoxynucleoside triphosphates and ATP binding. The type of nucleotide bound at the specificity site determines substrate preference. It seems probable that ATP makes the enzyme reduce CDP and UDP, dGTP favors ADP reduction and dTTP favors GDP reduction. Functionally, provides the precursors necessary for DNA synthesis. Catalyzes the biosynthesis of deoxyribonucleotides from the corresponding ribonucleotides. The sequence is that of Ribonucleoside-diphosphate reductase subunit alpha (NRDA) from Escherichia coli (Bacteriophage T4).